A 399-amino-acid chain; its full sequence is Exodeoxyribonuclease 7 large subunit (399 aa).

Belongs to the XseA family. In terms of assembly, heterooligomer composed of large and small subunits.

The protein localises to the cytoplasm. The enzyme catalyses Exonucleolytic cleavage in either 5'- to 3'- or 3'- to 5'-direction to yield nucleoside 5'-phosphates.. Its function is as follows. Bidirectionally degrades single-stranded DNA into large acid-insoluble oligonucleotides, which are then degraded further into small acid-soluble oligonucleotides. This chain is Exodeoxyribonuclease 7 large subunit, found in Clostridium acetobutylicum (strain ATCC 824 / DSM 792 / JCM 1419 / IAM 19013 / LMG 5710 / NBRC 13948 / NRRL B-527 / VKM B-1787 / 2291 / W).